Here is a 205-residue protein sequence, read N- to C-terminus: MTTDFLFPKIADCSYVSCYCEENVWKLCEQVKRTRPEELSKCYAVFVSNEGRTVPLWRQKAGRGDDQVVIWDYHVFFMHNPLPNRCLVFDLDTTLPFPTYFHKYVTETFRSDLALRPEHHRFFRVIPADTYLIEFSSDRRHMRRPDGSWIKPPPSYPPILSNTNLHCLGDFICMSAGKGPGAVYSLSEFVQNFYKSPHVGVQQNK.

Active-site residues include C20, H74, and D90.

Belongs to the NTAQ1 family. In terms of assembly, monomer.

The catalysed reaction is N-terminal L-glutaminyl-[protein] + H2O = N-terminal L-glutamyl-[protein] + NH4(+). Functionally, mediates the side-chain deamidation of N-terminal glutamine residues to glutamate, an important step in N-end rule pathway of protein degradation. Conversion of the resulting N-terminal glutamine to glutamate renders the protein susceptible to arginylation, polyubiquitination and degradation as specified by the N-end rule. Does not act on substrates with internal or C-terminal glutamine and does not act on non-glutamine residues in any position. The protein is Protein N-terminal glutamine amidohydrolase (tun) of Drosophila virilis (Fruit fly).